We begin with the raw amino-acid sequence, 207 residues long: Large ribosomal subunit protein uL4 (207 aa).

Residues 53–76 (TVSEVSGTTKKPFKQKGTGNARQG) are disordered.

The protein belongs to the universal ribosomal protein uL4 family. As to quaternary structure, part of the 50S ribosomal subunit.

One of the primary rRNA binding proteins, this protein initially binds near the 5'-end of the 23S rRNA. It is important during the early stages of 50S assembly. It makes multiple contacts with different domains of the 23S rRNA in the assembled 50S subunit and ribosome. Functionally, forms part of the polypeptide exit tunnel. The polypeptide is Large ribosomal subunit protein uL4 (Rickettsia bellii (strain OSU 85-389)).